The following is a 910-amino-acid chain: Constitutive coactivator of peroxisome proliferator-activated receptor gamma (910 aa).

Disordered regions lie at residues 333–416, 443–483, and 863–910; these read SDAE…VPMC, SEPR…ESRQ, and SHHA…WRRY. 3 stretches are compositionally biased toward basic and acidic residues: residues 335–351, 360–375, and 396–411; these read AESR…ESRQ and ESRR…EPRQ. Over residues 872-890 the composition is skewed to polar residues; sequence QGSSYHRTGSGYSRSSQGQ. Position 885 is an omega-N-methylarginine (R885). Over residues 901 to 910 the composition is skewed to basic and acidic residues; that stretch reads QYEHDQWRRY.

Belongs to the constitutive coactivator of PPAR-gamma family. In terms of assembly, interacts with ESR1 and RXRA. Interacts with PPARG; in a ligand-independent manner. As to expression, widely expressed.

Its subcellular location is the nucleus. Functionally, functions as a transactivator of PPARG and ESR1. Functions in adipogenesis through PPARG activation. This Homo sapiens (Human) protein is Constitutive coactivator of peroxisome proliferator-activated receptor gamma (FAM120B).